The primary structure comprises 237 residues: Small ribosomal subunit protein uS5 (237 aa).

The disordered stretch occupies residues 1–59 (MADETNLEGVAAVEATGGEPQREGRGRGRGRGGNDRGGERGGRGRRDDRRGRGNNDEEG). Residues 20–55 (PQREGRGRGRGRGGNDRGGERGGRGRRDDRRGRGNN) show a composition bias toward basic and acidic residues. The 64-residue stretch at 63–126 (LIEKLVHINR…AAAKRAMVRV (64 aa)) folds into the S5 DRBM domain.

This sequence belongs to the universal ribosomal protein uS5 family. Part of the 30S ribosomal subunit. Contacts proteins S4 and S8.

Functionally, with S4 and S12 plays an important role in translational accuracy. Its function is as follows. Located at the back of the 30S subunit body where it stabilizes the conformation of the head with respect to the body. This is Small ribosomal subunit protein uS5 from Novosphingobium aromaticivorans (strain ATCC 700278 / DSM 12444 / CCUG 56034 / CIP 105152 / NBRC 16084 / F199).